The primary structure comprises 780 residues: MATVDLEKLRMSGAGKAIGVLTSGGDAQGMNAAVRAVTRMGIYVGAKVFLIYEGYEGLVEGGENIKPANWLSVSNIIQLGGTIIGSARCKAFTTREGRLAAAYNLLQHGITNLCVIGGDGSLTGANIFRNEWGSLLEELVKEGKISESTAQNYAHLSIAGLVGSIDNDFCGTDMTIGTDSALHRIMEVIDAITTTAQSHQRTFVLEVMGRHCGYLALVSALASGADWLFIPEAPPEDGWENFMCERLGETRSRGSRLNIIIIAEGAIDRHGKPISSSYVKDLVVQRLGFDTRVTVLGHVQRGGTPSAFDRVLSSKMGMEAVMALLEATPDTPACVVSLSGNQSVRLPLMECVQVTKDVQKAMDEKRFDEAIQLRGRSFENNWKIYKLLAHQKVSKEKSNFSLAILNVGAPAAGMNAAVRSAVRTGISEGHTVYVVHDGFEGLAKGQVQEVGWHDVAGWLGRGGSMLGTKRTLPKPHLEAIVENLRTYNIHALLVIGGFEAYEGVLQLVEARGRYEELCIVMCVIPATISNNVPGTDFSLGSDTAVNAAMESCDRIKQSASGTKRRVFIVETMGGYCGYLATVTGIAVGADAAYVFEDPFNIHDLKANVEHMTEKMKTDIQRGLVLRNEKCHEHYTTEFLYNLYSSEGRGVFDCRTNVLGHLQQGGAPTPFDRNYGTKLGVKAMLWMSEKLRDVYRKGRVFANAPDSACVIGLRKKVVAFSSVTELKKETDFEHRMPREQWWLNLRLMLKMLAHYRISMADYVSGELEHVTRRTLSIDKGF.

At Ala-2 the chain carries N-acetylalanine. The tract at residues 2–390 (ATVDLEKLRM…NWKIYKLLAH (389 aa)) is N-terminal catalytic PFK domain 1. Residues Gly-25, 88–89 (RC), and 118–121 (GDGS) each bind ATP. Asp-119 is a binding site for Mg(2+). Substrate is bound by residues 164–166 (SID), Arg-201, 208–210 (MGR), Glu-264, Arg-292, and 298–301 (HVQR). Catalysis depends on Asp-166, which acts as the Proton acceptor. Ser-377 bears the Phosphoserine mark. The tract at residues 391–400 (QKVSKEKSNF) is interdomain linker. The interval 401 to 780 (SLAILNVGAP…RRTLSIDKGF (380 aa)) is C-terminal regulatory PFK domain 2. Residues Arg-470, 527–531 (TISNN), Arg-565, 572–574 (MGG), and Glu-628 each bind beta-D-fructose 2,6-bisphosphate. O-linked (GlcNAc) serine glycosylation occurs at Ser-529. Tyr-640 carries the phosphotyrosine modification. Beta-D-fructose 2,6-bisphosphate-binding positions include Arg-654, 660 to 663 (HLQQ), and Arg-734. Residue Ser-775 is modified to Phosphoserine.

This sequence belongs to the phosphofructokinase type A (PFKA) family. ATP-dependent PFK group I subfamily. Eukaryotic two domain clade 'E' sub-subfamily. Homo- and heterotetramers. Phosphofructokinase (PFK) enzyme functions as a tetramer composed of different combinations of 3 types of subunits, called PFKM (M), PFKL (L) and PFKP (P). The composition of the PFK tetramer differs according to the tissue type it is present in. The kinetic and regulatory properties of the tetrameric enzyme are dependent on the subunit composition, hence can vary across tissues. Mg(2+) serves as cofactor. Post-translationally, glcNAcylation at Ser-529 by OGT decreases enzyme activity, leading to redirect glucose flux through the oxidative pentose phosphate pathway. Glycosylation is stimulated by both hypoxia and glucose deprivation.

The protein resides in the cytoplasm. The enzyme catalyses beta-D-fructose 6-phosphate + ATP = beta-D-fructose 1,6-bisphosphate + ADP + H(+). Its pathway is carbohydrate degradation; glycolysis; D-glyceraldehyde 3-phosphate and glycerone phosphate from D-glucose: step 3/4. Its activity is regulated as follows. Allosterically activated by ADP, AMP, or fructose 2,6-bisphosphate, and allosterically inhibited by ATP or citrate. GlcNAcylation by OGT overcomes allosteric regulation. Its function is as follows. Catalyzes the phosphorylation of D-fructose 6-phosphate to fructose 1,6-bisphosphate by ATP, the first committing step of glycolysis. Negatively regulates the phagocyte oxidative burst in response to bacterial infection by controlling cellular NADPH biosynthesis and NADPH oxidase-derived reactive oxygen species. Upon macrophage activation, drives the metabolic switch toward glycolysis, thus preventing glucose turnover that produces NADPH via pentose phosphate pathway. The polypeptide is ATP-dependent 6-phosphofructokinase, liver type (Pfkl) (Rattus norvegicus (Rat)).